Here is a 325-residue protein sequence, read N- to C-terminus: Putative [LysW]-lysine/[LysW]-ornithine hydrolase (325 aa).

His-66 is a binding site for Zn(2+). Asp-68 is a catalytic residue. Asp-90 serves as a coordination point for Zn(2+). The active-site Proton acceptor is Glu-117. Residues Glu-118, Glu-139, and His-297 each coordinate Zn(2+).

It belongs to the peptidase M20A family. LysK subfamily. The cofactor is Zn(2+). Co(2+) serves as cofactor.

It localises to the cytoplasm. The enzyme catalyses [amino-group carrier protein]-C-terminal-gamma-(L-lysyl)-L-glutamate + H2O = [amino-group carrier protein]-C-terminal-L-glutamate + L-lysine. It carries out the reaction [amino-group carrier protein]-C-terminal-gamma-(L-ornithyl)-L-glutamate + H2O = [amino-group carrier protein]-C-terminal-L-glutamate + L-ornithine. It functions in the pathway amino-acid biosynthesis; L-lysine biosynthesis via AAA pathway; L-lysine from L-alpha-aminoadipate (Thermus route): step 5/5. The protein operates within amino-acid biosynthesis; L-arginine biosynthesis. In terms of biological role, catalyzes the release of L-lysine from [LysW]-gamma-L-lysine and the release of L-ornithine from [LysW]-L-ornithine. In Pyrococcus horikoshii (strain ATCC 700860 / DSM 12428 / JCM 9974 / NBRC 100139 / OT-3), this protein is Putative [LysW]-lysine/[LysW]-ornithine hydrolase.